The chain runs to 288 residues: Bifunctional protein MdtA (288 aa).

NADP(+) is bound by residues T129 to V132, R152 to K156, T195 to A198, and K256.

As to quaternary structure, homotrimer.

The protein localises to the cytoplasm. It carries out the reaction 5,10-methylenetetrahydromethanopterin + NADP(+) = 5,10-methenyl-5,6,7,8-tetrahydromethanopterin + NADPH. The enzyme catalyses (6R)-5,10-methylene-5,6,7,8-tetrahydrofolate + NADP(+) = (6R)-5,10-methenyltetrahydrofolate + NADPH. Its pathway is one-carbon metabolism; formaldehyde degradation; formate from formaldehyde (H(4)MPT route): step 2/5. Functionally, catalyzes the dehydrogenation of methylene-H(4)MPT. Can also catalyze the reversible dehydrogenation of methylene-H(4)F with 20-fold lower catalytic efficiency. The polypeptide is Bifunctional protein MdtA (Methylorubrum extorquens (strain ATCC 14718 / DSM 1338 / JCM 2805 / NCIMB 9133 / AM1) (Methylobacterium extorquens)).